Consider the following 396-residue polypeptide: Aspartic protease 1 (396 aa).

The signal sequence occupies residues 1-15 (MQTFVLLALVAACSA). In terms of domain architecture, Peptidase A1 spans 68-389 (YLGNITLGTP…DIGNGQIGFA (322 aa)). N-linked (GlcNAc...) asparagine glycosylation is present at Asn71. The active site involves Asp86. Cys99 and Cys104 are oxidised to a cystine. Asp278 is a catalytic residue. An intrachain disulfide couples Cys313 to Cys349.

It belongs to the peptidase A1 family. As to quaternary structure, interacts with B.thuringiensis endotoxin Cry6Aa; the interaction prevents Cry6Aa proteolysis by host gut proteases.

The protein resides in the cytoplasm. It is found in the lysosome. The protein localises to the secreted. In terms of biological role, aspartic protease, which is part of the necrosis cell death pathway. Promotes B.thuringiensis Cry6Aa stability by preventing its proteolysis by host gut proteases. Required for Cry6Aa-induced necrotic death of intestinal cells. Cry6Aa uptake into the host intestinal cells triggers an increase in intracellular Ca(2+) levels leading to lysosome rupture and to the subsequent release of asp-1 which leads to necrosis. This Caenorhabditis elegans protein is Aspartic protease 1.